The chain runs to 729 residues: Fatty acid oxidation complex subunit alpha (729 aa).

An enoyl-CoA hydratase/isomerase region spans residues 1-189 (MLYKGDTLYL…KIGLVDGVVK (189 aa)). D296 contributes to the substrate binding site. Positions 311–729 (ETPKQAAVLG…ARPVGDLKTA (419 aa)) are 3-hydroxyacyl-CoA dehydrogenase. Residues M324, D343, 400–402 (VVE), K407, and S429 each bind NAD(+). H450 serves as the catalytic For 3-hydroxyacyl-CoA dehydrogenase activity. N453 contacts NAD(+). Substrate-binding residues include N500 and Y660. Residues 708 to 729 (RHNEPYYPPVEPARPVGDLKTA) form a disordered region.

In the N-terminal section; belongs to the enoyl-CoA hydratase/isomerase family. This sequence in the C-terminal section; belongs to the 3-hydroxyacyl-CoA dehydrogenase family. Heterotetramer of two alpha chains (FadB) and two beta chains (FadA).

The catalysed reaction is a (3S)-3-hydroxyacyl-CoA + NAD(+) = a 3-oxoacyl-CoA + NADH + H(+). It carries out the reaction a (3S)-3-hydroxyacyl-CoA = a (2E)-enoyl-CoA + H2O. The enzyme catalyses a 4-saturated-(3S)-3-hydroxyacyl-CoA = a (3E)-enoyl-CoA + H2O. It catalyses the reaction (3S)-3-hydroxybutanoyl-CoA = (3R)-3-hydroxybutanoyl-CoA. The catalysed reaction is a (3Z)-enoyl-CoA = a 4-saturated (2E)-enoyl-CoA. It carries out the reaction a (3E)-enoyl-CoA = a 4-saturated (2E)-enoyl-CoA. Its pathway is lipid metabolism; fatty acid beta-oxidation. Its function is as follows. Involved in the aerobic and anaerobic degradation of long-chain fatty acids via beta-oxidation cycle. Catalyzes the formation of 3-oxoacyl-CoA from enoyl-CoA via L-3-hydroxyacyl-CoA. It can also use D-3-hydroxyacyl-CoA and cis-3-enoyl-CoA as substrate. The chain is Fatty acid oxidation complex subunit alpha from Escherichia coli O139:H28 (strain E24377A / ETEC).